Consider the following 161-residue polypeptide: Globin CTT-VIIB-4 (161 aa).

The first 16 residues, 1 to 16 (MKFFAVLALCIVGAIA), serve as a signal peptide directing secretion. Residues 18–161 (PLTADEASLV…NTMAVAVAHL (144 aa)) enclose the Globin domain. Positions 76 and 111 each coordinate heme b.

Belongs to the globin family. Homodimer.

The polypeptide is Globin CTT-VIIB-4 (CTT-7B4) (Chironomus thummi thummi (Midge)).